Here is a 388-residue protein sequence, read N- to C-terminus: Succinate--CoA ligase [ADP-forming] subunit beta (388 aa).

The 236-residue stretch at 9 to 244 folds into the ATP-grasp domain; it reads KQLFAEFGLP…PSQEDEREAH (236 aa). ATP contacts are provided by residues K46, 53–55, E99, S102, and E107; that span reads GRG. Residues N199 and D213 each contribute to the Mg(2+) site. Residues N264 and 321-323 each bind substrate; that span reads GIV.

Belongs to the succinate/malate CoA ligase beta subunit family. As to quaternary structure, heterotetramer of two alpha and two beta subunits. The cofactor is Mg(2+).

The enzyme catalyses succinate + ATP + CoA = succinyl-CoA + ADP + phosphate. It catalyses the reaction GTP + succinate + CoA = succinyl-CoA + GDP + phosphate. Its pathway is carbohydrate metabolism; tricarboxylic acid cycle; succinate from succinyl-CoA (ligase route): step 1/1. Functionally, succinyl-CoA synthetase functions in the citric acid cycle (TCA), coupling the hydrolysis of succinyl-CoA to the synthesis of either ATP or GTP and thus represents the only step of substrate-level phosphorylation in the TCA. The beta subunit provides nucleotide specificity of the enzyme and binds the substrate succinate, while the binding sites for coenzyme A and phosphate are found in the alpha subunit. This chain is Succinate--CoA ligase [ADP-forming] subunit beta, found in Aliivibrio fischeri (strain ATCC 700601 / ES114) (Vibrio fischeri).